The primary structure comprises 357 residues: Retinoic acid-induced protein 3 (357 aa).

The Extracellular portion of the chain corresponds to 1 to 33 (MATTVPDGCRNGLKSKYYRLCDKAEAWGIVLET). Residues 34 to 54 (VATAGVVTSVAFMLTLPILVC) form a helical membrane-spanning segment. Residues 55-68 (KVQDSNRRKMLPTQ) are Cytoplasmic-facing. Residues 69–89 (FLFLLGVLGIFGLTFAFIIGL) form a helical membrane-spanning segment. The Extracellular segment spans residues 90 to 97 (DGSTGPTR). The helical transmembrane segment at 98-118 (FFLFGILFSICFSCLLAHAVS) threads the bilayer. The Cytoplasmic portion of the chain corresponds to 119–129 (LTKLVRGRKPL). The chain crosses the membrane as a helical span at residues 130 to 150 (SLLVILGLAVGFSLVQDVIAI). Residues 151–176 (EYIVLTMNRTNVNVFSELSAPRRNED) are Extracellular-facing. N-linked (GlcNAc...) asparagine glycosylation occurs at Asn-158. A helical membrane pass occupies residues 177–197 (FVLLLTYVLFLMALTFLMSSF). Residues 198-212 (TFCGSFTGWKRHGAH) are Cytoplasmic-facing. Residues 213-233 (IYLTMLLSIAIWVAWITLLML) form a helical membrane-spanning segment. Topologically, residues 234-247 (PDFDRRWDDTILSS) are extracellular. The helical transmembrane segment at 248–268 (ALAANGWVFLLAYVSPEFWLL) threads the bilayer. The Cytoplasmic segment spans residues 269–357 (TKQRNPMDYP…KDYEVKKEGS (89 aa)). Ser-301 is modified (phosphoserine). Tyr-317 and Tyr-320 each carry phosphotyrosine. Position 345 is a phosphoserine (Ser-345). Phosphotyrosine is present on residues Tyr-347 and Tyr-350.

This sequence belongs to the G-protein coupled receptor 3 family. As to quaternary structure, interacts (via its transmembrane domain) with EGFR. Post-translationally, phosphorylated in two conserved double-tyrosine motifs, Tyr-317/Tyr-320 and Tyr-347/Tyr-350, by EGFR; leading to inactivation of the tumor suppressive function of GPRC5A in lung cancer cells. Tyr-317 and Tyr-320 are the preferred residues responsible for EGFR-mediated GPRC5A phosphorylation. As to expression, expressed at high level in fetal and adult lung tissues but repressed in most human lung cancers. Constitutively expressed in fetal kidney and adult placenta, kidney, prostate, testis, ovary, small intestine, colon, stomach, and spinal cord at low to moderate levels. Not detectable in fetal heart, brain, and liver and adult heart, brain, liver, skeletal muscle, pancreas, spleen, thymus, and peripheral leukocytes. According to PubMed:10783259, expressed at low but detectable level in pancreas and heart.

It localises to the cell membrane. Its subcellular location is the cytoplasmic vesicle membrane. Orphan receptor. Could be involved in modulating differentiation and maintaining homeostasis of epithelial cells. This retinoic acid-inducible GPCR provide evidence for a possible interaction between retinoid and G-protein signaling pathways. Functions as a negative modulator of EGFR signaling. May act as a lung tumor suppressor. The protein is Retinoic acid-induced protein 3 (GPRC5A) of Homo sapiens (Human).